A 393-amino-acid chain; its full sequence is Arginine biosynthesis bifunctional protein ArgJ (393 aa).

Substrate contacts are provided by T145, K171, T182, E265, N388, and S393. T182 serves as the catalytic Nucleophile.

This sequence belongs to the ArgJ family. As to quaternary structure, heterotetramer of two alpha and two beta chains.

It localises to the cytoplasm. The catalysed reaction is N(2)-acetyl-L-ornithine + L-glutamate = N-acetyl-L-glutamate + L-ornithine. It catalyses the reaction L-glutamate + acetyl-CoA = N-acetyl-L-glutamate + CoA + H(+). It functions in the pathway amino-acid biosynthesis; L-arginine biosynthesis; L-ornithine and N-acetyl-L-glutamate from L-glutamate and N(2)-acetyl-L-ornithine (cyclic): step 1/1. It participates in amino-acid biosynthesis; L-arginine biosynthesis; N(2)-acetyl-L-ornithine from L-glutamate: step 1/4. Functionally, catalyzes two activities which are involved in the cyclic version of arginine biosynthesis: the synthesis of N-acetylglutamate from glutamate and acetyl-CoA as the acetyl donor, and of ornithine by transacetylation between N(2)-acetylornithine and glutamate. This chain is Arginine biosynthesis bifunctional protein ArgJ, found in Nitratidesulfovibrio vulgaris (strain ATCC 29579 / DSM 644 / CCUG 34227 / NCIMB 8303 / VKM B-1760 / Hildenborough) (Desulfovibrio vulgaris).